The following is a 281-amino-acid chain: Large ribosomal subunit protein uL2 (281 aa).

Disordered stretches follow at residues 1–23 and 224–281; these read MAVKHYKPVTNGRRNMSSLDYSK and RGSV…KDSK. A compositionally biased stretch (polar residues) spans 12–23; sequence GRRNMSSLDYSK. Residues 261–281 are compositionally biased toward basic residues; that stretch reads KTRKTKKSSTKLILRRRKDSK.

It belongs to the universal ribosomal protein uL2 family. In terms of assembly, part of the 50S ribosomal subunit. Forms a bridge to the 30S subunit in the 70S ribosome.

Functionally, one of the primary rRNA binding proteins. Required for association of the 30S and 50S subunits to form the 70S ribosome, for tRNA binding and peptide bond formation. It has been suggested to have peptidyltransferase activity; this is somewhat controversial. Makes several contacts with the 16S rRNA in the 70S ribosome. The chain is Large ribosomal subunit protein uL2 from Mycoplasmopsis agalactiae (strain NCTC 10123 / CIP 59.7 / PG2) (Mycoplasma agalactiae).